The following is a 455-amino-acid chain: MSSSGLNSEKVAALIQKLNSDPQFVLAQNVGTTHDLLDICLKRATVQRAQHVFQHAVPQEGKPITNQKSSGRCWIFSCLNVMRLPFMKKLNIEEFEFSQSYLFFWDKVERCYFFLSAFVDTAQRKEPEDGRLVQFLLMNPANDGGQWDMLVNIVEKYGVIPKKCFPESYTTEATRRMNDILNHKMREFCIRLRNLVHSGATKGEISATQDVMMEEIFRVVCICLGNPPETFTWEYRDKDKNYQKIGPITPLEFYREHVKPLFNMEDKICLVNDPRPQHKYNKLYTVEYLSNMVGGRKTLYNNQPIDFLKKMVAASIKDGEAVWFGCDVGKHFNSKLGLSDMNLYDHELVFGVSLKNMNKAERLTFGESLMTHAMTFTAVSEKDDQDGAFTKWRVENSWGEDHGHKGYLCMTDEWFSEYVYEVVVDRKHVPEEVLAVLEQEPIILPAWDPMGALAE.

At Met-1 the chain carries N-acetylmethionine. Residues Cys-73 and His-372 contribute to the active site. Position 391 is an N6-acetyllysine (Lys-391). Asn-396 is an active-site residue.

This sequence belongs to the peptidase C1 family. Homohexamer. Interacts with NUDT12 (via ANK repeats).

The protein localises to the cytoplasm. It localises to the cytoplasmic granule. It carries out the reaction Inactivates bleomycin B2 (a cytotoxic glycometallopeptide) by hydrolysis of a carboxyamide bond of beta-aminoalanine, but also shows general aminopeptidase activity. The specificity varies somewhat with source, but amino acid arylamides of Met, Leu and Ala are preferred.. The normal physiological role of BLM hydrolase is unknown, but it catalyzes the inactivation of the antitumor drug BLM (a glycopeptide) by hydrolyzing the carboxamide bond of its B-aminoalaninamide moiety thus protecting normal and malignant cells from BLM toxicity. This chain is Bleomycin hydrolase (BLMH), found in Homo sapiens (Human).